A 928-amino-acid polypeptide reads, in one-letter code: Autophagy-related protein 9 (928 aa).

The Cytoplasmic portion of the chain corresponds to 1–295 (MEQSGHEPGK…NGFHCIILQK (295 aa)). Disordered stretches follow at residues 28-118 (SIHT…PFGS) and 188-216 (NDVK…SSSN). Acidic residues predominate over residues 77-86 (LESDTSEEDE). Over residues 90-99 (GINSDSQVID) the composition is skewed to polar residues. Over residues 201-216 (SHNYNPTSTYTNSSSN) the composition is skewed to low complexity. The chain crosses the membrane as a helical span at residues 296–316 (VLNILTLLFVVFVSSFMGYCV). Residues 317–345 (DYSKLPTSTRFSEIKIDHCYSQNITGFTK) are Lumenal-facing. Residue Asn-339 is glycosylated (N-linked (GlcNAc...) asparagine). A helical membrane pass occupies residues 346-366 (FLLFLFYGFVILKVIQLYFDI). The Cytoplasmic segment spans residues 367 to 507 (NNIREMKLFY…NELRKRFMLA (141 aa)). An intramembrane segment occupies 508 to 528 (GFLNIILSPFLVSYFVLLYFF). Residues 529 to 588 (RYFNEYKTSPENIGARQYTPMAEWKFREYNELYHIFRKRIGLSNPLASKYVDQFPKEKTN) are Cytoplasmic-facing. Residues 589-609 (ILLKFVSFISGSFVAILAILA) traverse the membrane as a helical segment. Over 610-625 (LWDPENFLNFEVTHDK) the chain is Lumenal. A helical transmembrane segment spans residues 626–646 (TVLFYITVLGAIWSISQGSVS). Topologically, residues 647–692 (TEYHVFDPEETLRELAEYTHYLPDSWKDRYHTEGVKQEFCELYNLR) are cytoplasmic. An intramembrane segment occupies 693-713 (ITVLLRELASLITTPFILWFS). Residues 714–928 (LPNSAGKMVD…EYYKKSDVGR (215 aa)) lie on the Cytoplasmic side of the membrane. Residues 755-779 (FGTDGNETTEQDAATEEQDIDSEPD) form a disordered region. A compositionally biased stretch (acidic residues) spans 761-779 (ETTEQDAATEEQDIDSEPD).

This sequence belongs to the ATG9 family. As to quaternary structure, homotrimer; forms a homotrimer with a central pore that forms a path between the two membrane leaflets. Post-translationally, phosphorylated by ATG1. ATG1 phosphorylation is required for preautophagosome elongation.

The protein resides in the preautophagosomal structure membrane. It localises to the cytoplasmic vesicle membrane. The protein localises to the golgi apparatus membrane. It is found in the endoplasmic reticulum membrane. The enzyme catalyses a 1,2-diacyl-sn-glycero-3-phosphocholine(in) = a 1,2-diacyl-sn-glycero-3-phosphocholine(out). The catalysed reaction is a 1,2-diacyl-sn-glycero-3-phospho-L-serine(in) = a 1,2-diacyl-sn-glycero-3-phospho-L-serine(out). It catalyses the reaction a 1,2-diacyl-sn-glycero-3-phosphoethanolamine(in) = a 1,2-diacyl-sn-glycero-3-phosphoethanolamine(out). It carries out the reaction a 1,2-diacyl-sn-glycero-3-phospho-(1D-myo-inositol-3-phosphate)(in) = a 1,2-diacyl-sn-glycero-3-phospho-(1D-myo-inositol-3-phosphate)(out). Phospholipid scramblase involved in autophagy and cytoplasm to vacuole transport (Cvt) vesicle formation. Cycles between the preautophagosomal structure/phagophore assembly site (PAS) and the cytoplasmic vesicle pool and supplies membrane for the growing autophagosome. Lipid scramblase activity plays a key role in preautophagosomal structure/phagophore assembly by distributing the phospholipids that arrive through ATG2 from the cytoplasmic to the luminal leaflet of the bilayer, thereby driving autophagosomal membrane expansion. Required for mitophagy. Also involved in endoplasmic reticulum-specific autophagic process and is essential for the survival of cells subjected to severe ER stress. Different machineries are required for anterograde trafficking to the PAS during either the Cvt pathway or bulk autophagy and for retrograde trafficking. The polypeptide is Autophagy-related protein 9 (ATG9) (Candida glabrata (strain ATCC 2001 / BCRC 20586 / JCM 3761 / NBRC 0622 / NRRL Y-65 / CBS 138) (Yeast)).